A 419-amino-acid chain; its full sequence is Synaptotagmin-1 (419 aa).

Residues 1–57 (MVSESHHEALAAPPVTTVATVLPSNATEPASPGEGKEDAFSKLKEKFMNELHKIPLP) lie on the Vesicular side of the membrane. N25 is a glycosylation site (N-linked (GlcNAc...) asparagine). Residues 58–80 (PWALIAIAIVAVLLVLTCCFCIC) traverse the membrane as a helical segment. 5 S-palmitoyl cysteine lipidation sites follow: C75, C76, C78, C80, and C83. Over 81–419 (KKCLFKKKNK…EVDAMLAVKK (339 aa)) the chain is Cytoplasmic. The segment at 108-139 (KDLGKTMKDQDDDAETGLTDGEEKEEPKEEEK) is disordered. A compositionally biased stretch (acidic residues) spans 117–131 (QDDDAETGLTDGEEK). T126 carries the post-translational modification Phosphothreonine. A phospholipid binding region spans residues 133–379 (EPKEEEKLGK…AIGKVFVGYN (247 aa)). The C2 1 domain occupies 139-258 (KLGKLQYSLD…DFGHVTEEWR (120 aa)). The Ca(2+) site is built by L169, D170, and D176. Phosphotyrosine is present on Y227. Residues D228, F229, D230, S233, K234, and D236 each coordinate Ca(2+). S262 carries the post-translational modification Phosphoserine. Residues 270-403 (KLGDICFSLR…NPRRPIAQWH (134 aa)) enclose the C2 2 domain. Ca(2+) is bound by residues D301 and D307. A phosphoserine mark is found at S340 and S342. Residues D361, D363, and D369 each contribute to the Ca(2+) site.

Belongs to the synaptotagmin family. As to quaternary structure, homotetramer. Heterodimer; heterodimerizes with SYT2 in presence of calcium. Interacts with SCAMP5. Interacts with STON2. Forms a complex with SV2B, syntaxin 1 and SNAP25. Interacts with SV2A, SV2B and SV2C. Interacts with RIMS1. Interacts with PRRT2. Interacts with DNAJC5 in a phosphorylation-dependent manner. Interacts (via N-terminus) with RAB3A. Interacts with SYT12. Interacts with calmodulin. Interacts with DNM1 (via C-terminal proline-rich domain (PRD)); this interaction facilitates vesicle fission during clathrin-mediated endocytosis (CME). Requires Ca(2+) as cofactor. Glycosylated.

It is found in the cytoplasmic vesicle. It localises to the secretory vesicle membrane. The protein resides in the secretory vesicle. Its subcellular location is the synaptic vesicle membrane. The protein localises to the chromaffin granule membrane. It is found in the cytoplasm. Its function is as follows. Calcium sensor that participates in triggering neurotransmitter release at the synapse. May have a regulatory role in the membrane interactions during trafficking of synaptic vesicles at the active zone of the synapse. It binds acidic phospholipids with a specificity that requires the presence of both an acidic head group and a diacyl backbone. A Ca(2+)-dependent interaction between synaptotagmin and putative receptors for activated protein kinase C has also been reported. It can bind to at least three additional proteins in a Ca(2+)-independent manner; these are neurexins, syntaxin and AP2. Plays a role in dendrite formation by melanocytes. The chain is Synaptotagmin-1 from Macaca fascicularis (Crab-eating macaque).